A 516-amino-acid polypeptide reads, in one-letter code: Zinc finger protein 83 (516 aa).

The disordered stretch occupies residues 1 to 20 (MHGRKDDAQKQPVKNQLGLN). The C2H2-type 1; degenerate zinc-finger motif lies at 93 to 115 (YKCSERGKAFHQGLHFTIHQIIH). 14 C2H2-type zinc fingers span residues 121–143 (FKCD…QRIH), 149–171 (YKCN…RRIH), 177–199 (YKCN…QRIH), 205–227 (YKCN…RTIH), 233–255 (YECN…LIIH), 261–283 (YRCN…QRIH), 289–311 (YKCN…WRIH), 317–339 (YKCN…WRIH), 345–367 (YKCN…LIIH), 373–395 (YKCD…HRIH), 401–423 (YKCD…WRIH), 429–451 (YKCN…RKIH), 457–479 (FKCN…HAIH), and 485–507 (FKCN…QRFH).

It belongs to the krueppel C2H2-type zinc-finger protein family.

It localises to the nucleus. Functionally, may be involved in transcriptional regulation. In Homo sapiens (Human), this protein is Zinc finger protein 83 (ZNF83).